A 300-amino-acid polypeptide reads, in one-letter code: tRNA U34 carboxymethyltransferase (300 aa).

Carboxy-S-adenosyl-L-methionine is bound by residues K73, W87, K92, G111, 133–135 (DPS), 160–161 (VE), Y180, and R293.

Belongs to the class I-like SAM-binding methyltransferase superfamily. CmoB family. In terms of assembly, homotetramer.

It catalyses the reaction carboxy-S-adenosyl-L-methionine + 5-hydroxyuridine(34) in tRNA = 5-carboxymethoxyuridine(34) in tRNA + S-adenosyl-L-homocysteine + H(+). In terms of biological role, catalyzes carboxymethyl transfer from carboxy-S-adenosyl-L-methionine (Cx-SAM) to 5-hydroxyuridine (ho5U) to form 5-carboxymethoxyuridine (cmo5U) at position 34 in tRNAs. The sequence is that of tRNA U34 carboxymethyltransferase from Nautilia profundicola (strain ATCC BAA-1463 / DSM 18972 / AmH).